The primary structure comprises 472 residues: MAGGEAGVTLGQPHLSRQDLATLDVSKLTPLSHEVISRQATINIGTIGHVAHGKSTVVKAISGVHTVRFKNELERNITIKLGYANAKIYKLDDPSCPRPECYRSCGSSTPDEFPTDIPGTKGNFKLVRHVSFVDCPGHDILMATMLNGAAVMDAALLLIAGNESCPQPQTSEHLAAIEIMKLKHILILQNKIDLVKESQAKEQYEQILAFVQGTVAEGAPIIPISAQLKYNIEVVCEYIVKKIPVPPRDFTSEPRLIVIRSFDVNKPGCEVDDLKGGVAGGSILKGVLKVGQEIEVRPGIVSKDSEGKLMCKPIFSKIVSLFAEHNDLQYAAPGGLIGVGTKIDPTLCRADRMVGQVLGAVGALPEIFTELEISYFLLRRLLGVRTEGDKKAAKVQKLSKNEVLMVNIGSLSTGGRVSAVKADLGKIVLTNPVCTEVGEKIALSRRVEKHWRLIGWGQIRRGVTIKPTVDDD.

Ala2 is subject to N-acetylalanine. The residue at position 16 (Ser16) is a Phosphoserine. The tr-type G domain maps to 39 to 248 (QATINIGTIG…IVKKIPVPPR (210 aa)). The segment at 48 to 55 (GHVAHGKS) is G1. 51–56 (AHGKST) serves as a coordination point for GTP. The G2 stretch occupies residues 76-80 (NITIK). Residues 134–137 (DCPG) are G3. GTP contacts are provided by residues 190–193 (NKID) and 225–227 (SAQ). Residues 190-193 (NKID) form a G4 region. A G5 region spans residues 225–227 (SAQ). An interacts with CDC123 region spans residues 457–469 (GQIRRGVTIKPTV).

It belongs to the TRAFAC class translation factor GTPase superfamily. Classic translation factor GTPase family. EIF2G subfamily. As to quaternary structure, eukaryotic translation initiation factor 2 eIF2 is a heterotrimeric complex composed of an alpha (EIF2S1), a beta (EIF2S2) and a gamma (EIF2S3) chain. eIF2 is member of the 43S pre-initiation complex (43S PIC). Interacts (via C-terminus) with CDC123; the interaction is direct.

Its subcellular location is the cytoplasm. It localises to the cytosol. It carries out the reaction GTP + H2O = GDP + phosphate + H(+). Its function is as follows. Member of the eIF2 complex that functions in the early steps of protein synthesis by forming a ternary complex with GTP and initiator tRNA. This complex binds to a 40S ribosomal subunit, followed by mRNA binding to form the 43S pre-initiation complex (43S PIC). Junction of the 60S ribosomal subunit to form the 80S initiation complex is preceded by hydrolysis of the GTP bound to eIF2 and release of an eIF2-GDP binary complex. In order for eIF2 to recycle and catalyze another round of initiation, the GDP bound to eIF2 must exchange with GTP by way of a reaction catalyzed by eIF-2B. The chain is Eukaryotic translation initiation factor 2 subunit 3 (EIF2S3) from Bos taurus (Bovine).